A 517-amino-acid polypeptide reads, in one-letter code: Crotonobetaine/carnitine--CoA ligase (517 aa).

It belongs to the ATP-dependent AMP-binding enzyme family.

The enzyme catalyses 4-(trimethylamino)butanoate + ATP + CoA = 4-(trimethylamino)butanoyl-CoA + AMP + diphosphate. It carries out the reaction crotonobetaine + ATP + CoA = crotonobetainyl-CoA + AMP + diphosphate. It catalyses the reaction (R)-carnitine + ATP + CoA = (R)-carnitinyl-CoA + AMP + diphosphate. It participates in amine and polyamine metabolism; carnitine metabolism. In terms of biological role, catalyzes the transfer of CoA to carnitine, generating the initial carnitinyl-CoA needed for the CaiB reaction cycle. Also has activity toward crotonobetaine and gamma-butyrobetaine. This chain is Crotonobetaine/carnitine--CoA ligase, found in Salmonella enteritidis PT4 (strain P125109).